Consider the following 276-residue polypeptide: Protein MGF 360-15R (276 aa).

This sequence belongs to the asfivirus MGF 360 family.

Functionally, plays a role in virus cell tropism, and may be required for efficient virus replication in macrophages. In African swine fever virus (isolate Warthog/Namibia/Wart80/1980) (ASFV), this protein is Protein MGF 360-15R.